We begin with the raw amino-acid sequence, 142 residues long: Large ribosomal subunit protein uL11 (142 aa).

This sequence belongs to the universal ribosomal protein uL11 family. Part of the ribosomal stalk of the 50S ribosomal subunit. Interacts with L10 and the large rRNA to form the base of the stalk. L10 forms an elongated spine to which L12 dimers bind in a sequential fashion forming a multimeric L10(L12)X complex. Post-translationally, one or more lysine residues are methylated.

Functionally, forms part of the ribosomal stalk which helps the ribosome interact with GTP-bound translation factors. The sequence is that of Large ribosomal subunit protein uL11 from Xanthomonas oryzae pv. oryzae (strain MAFF 311018).